The primary structure comprises 391 residues: MSLNPRDAVIVDFGRTPMGRSKGGMHRNTRAETMSAQLIDGLLARNPKIDPAEVEDVIWGCVNQTLEQGWNIARMASLLTRIPHTSAGQTVSRLCGSSMSALHTAVQAIQTNNGDVFVIGGVEHMGHVSMMHGVDPNPQLSLHAAKASGMMGLTAEMLGKMHGITREAQDQFGYRSHQLAWKATQEGKFKDEIIPMEGHDENGFLKVFDYDETIRPETTLEGLAELKPAFNPKGGTVTAGTSSQITDGASCMIVMSAQRAKDLGLQPMAVVRAMALAGVDPAIMGYGPVPSTQKALKRAGLTMDDISHVELNEAFAAQALPVLKDLKLLDKMEEKVNLHGGAIALGHPFGCSGARISGTLLNVMKQNNGTLGVATMCIGLGQGISTVFERL.

Catalysis depends on Cys95, which acts as the Acyl-thioester intermediate. Residues His347 and Cys377 each act as proton acceptor in the active site.

The protein belongs to the thiolase-like superfamily. Thiolase family. In terms of assembly, heterotetramer of two alpha chains (FadB) and two beta chains (FadA).

The protein localises to the cytoplasm. It catalyses the reaction an acyl-CoA + acetyl-CoA = a 3-oxoacyl-CoA + CoA. The protein operates within lipid metabolism; fatty acid beta-oxidation. Catalyzes the final step of fatty acid oxidation in which acetyl-CoA is released and the CoA ester of a fatty acid two carbons shorter is formed. The sequence is that of 3-ketoacyl-CoA thiolase from Stutzerimonas stutzeri (strain A1501) (Pseudomonas stutzeri).